The primary structure comprises 449 residues: Myb-related protein Pp1 (449 aa).

The region spanning 1-30 (LGNRWSAIAIPRRTDNEIKNYWNTHLKKRL) is the HTH myb-type domain. Positions 5 to 26 (WSAIAIPRRTDNEIKNYWNTHL) form a DNA-binding region, H-T-H motif.

It localises to the nucleus. Functionally, possible transcription activator. In Physcomitrium patens (Spreading-leaved earth moss), this protein is Myb-related protein Pp1 (PP1).